Consider the following 105-residue polypeptide: UPF0145 protein Sala_0338 (105 aa).

Belongs to the UPF0145 family.

This is UPF0145 protein Sala_0338 from Sphingopyxis alaskensis (strain DSM 13593 / LMG 18877 / RB2256) (Sphingomonas alaskensis).